Reading from the N-terminus, the 699-residue chain is MGHHRPWLHASVLWAGVASLLLPPAMTQQLRGDGLGFRNRNNSTGVAGLSEEASAELRHHLHSPRDHPDENKDVSTENGHHFWSHPDREKEDEDVSKEYGHLLPGHRSQDHKVGDEGVSGEEVFAEHGGQARGHRGHGSEDTEDSAEHRHHLPSHRSHSHQDEDEDEVVSSEHHHHILRHGHRGHDGEDDEGEEEEEEEEEEEEASTEYGHQAHRHRGHGSEEDEDVSDGHHHHGPSHRHQGHEEDDDDDDDDDDDDDDDDVSIEYRHQAHRHQGHGIEEDEDVSDGHHHRDPSHRHRSHEEDDNDDDDVSTEYGHQAHRHQDHRKEEVEAVSGEHHHHVPDHRHQGHRDEEEDEDVSTERWHQGPQHVHHGLVDEEEEEEEITVQFGHYVASHQPRGHKSDEEDFQDEYKTEVPHHHHHRVPREEDEEVSAELGHQAPSHRQSHQDEETGHGQRGSIKEMSHHPPGHTVVKDRSHLRKDDSEEEKEKEEDPGSHEEDDESSEQGEKGTHHGSRDQEDEEDEEEGHGLSLNQEEEEEEDKEEEEEEEDEERREERAEVGAPLSPDHSEEEEEEEEGLEEDEPRFTIIPNPLDRREEAGGASSEEESGEDTGPQDAQEYGNYQPGSLCGYCSFCNRCTECESCHCDEENMGEHCDQCQHCQFCYLCPLVCETVCAPGSYVDYFSSSLYQALADMLETPEP.

Positions 1–28 (MGHHRPWLHASVLWAGVASLLLPPAMTQ) are cleaved as a signal peptide. The disordered stretch occupies residues 50-95 (SEEASAELRHHLHSPRDHPDENKDVSTENGHHFWSHPDREKEDEDV). Residues 55-89 (AELRHHLHSPRDHPDENKDVSTENGHHFWSHPDRE) show a composition bias toward basic and acidic residues. The residue at position 76 (threonine 76) is a Phosphothreonine; by FAM20C. 10 repeat units span residues 106–121 (HRSQ…VSGE), 134–154 (HRGH…HLPS), 155–177 (HRSH…HHHI), 180–213 (HGHR…GHQA), 214–237 (HRHR…HGPS), 238–270 (HRHQ…RHQA), 271–294 (HRHQ…RDPS), 295–318 (HRHR…GHQA), 319–342 (HRHQ…HVPD), and 343–365 (HRHQ…WHQG). The segment at 106–342 (HRSQDHKVGD…SGEHHHHVPD (237 aa)) is 6 X approximate tandem repeats. A 4 X tandem repeats, acidic region spans residues 106 to 365 (HRSQDHKVGD…DVSTERWHQG (260 aa)). Serine 119 and serine 145 each carry phosphoserine; by FAM20C. Residues 127–617 (HGGQARGHRG…EDTGPQDAQE (491 aa)) are disordered. Basic residues-rich tracts occupy residues 148–158 (HRHHLPSHRSH) and 173–183 (HHHHILRHGHR). The segment covering 187–206 (GEDDEGEEEEEEEEEEEEAS) has biased composition (acidic residues). Basic residues predominate over residues 231–241 (HHHHGPSHRHQ). Acidic residues predominate over residues 244-263 (EEDDDDDDDDDDDDDDDDVS). The segment covering 288 to 298 (HHHRDPSHRHR) has biased composition (basic residues). Residues 302 to 311 (EDDNDDDDVS) show a composition bias toward acidic residues. Over residues 324-335 (HRKEEVEAVSGE) the composition is skewed to basic and acidic residues. Serine 333 is subject to Phosphoserine. Residues 336–347 (HHHHVPDHRHQG) are compositionally biased toward basic residues. 2 positions are modified to phosphoserine; by FAM20C: serine 358 and serine 431. Basic and acidic residues-rich tracts occupy residues 444–463 (SHQD…EMSH) and 470–481 (VVKDRSHLRKDD). At serine 494 the chain carries Phosphoserine; by FAM20C. Over residues 504–515 (QGEKGTHHGSRD) the composition is skewed to basic and acidic residues. 2 stretches are compositionally biased toward acidic residues: residues 532–551 (QEEE…DEER) and 567–581 (SEEE…EEDE). Serine 567 is modified (phosphoserine; by FAM20C). The metal-binding stretch occupies residues 627–673 (CGYCSFCNRCTECESCHCDEENMGEHCDQCQHCQFCYLCPLVCETVC).

This sequence belongs to the HRC family.

It localises to the sarcoplasmic reticulum lumen. Functionally, may play a role in the regulation of calcium sequestration or release in the SR of skeletal and cardiac muscle. The sequence is that of Sarcoplasmic reticulum histidine-rich calcium-binding protein (HRC) from Homo sapiens (Human).